The following is a 635-amino-acid chain: PTS system mannitol-specific EIICBA component (635 aa).

In terms of domain architecture, PTS EIIC type-2 spans 12-342 (FGRFLSNMVM…LFKTSKVKER (331 aa)). 6 consecutive transmembrane segments (helical) span residues 24-45 (IGAF…WLPN), 50-70 (KLVG…TGGK), 134-155 (SAGI…PAVE), 165-185 (VNFM…EPAK), 273-292 (VILG…GGLV), and 313-334 (FANI…AVLF). The PTS EIIB type-2 domain occupies 378-473 (RKIIVACDAG…RLVAAQRHID (96 aa)). Cysteine 384 functions as the Phosphocysteine intermediate; for EIIB activity in the catalytic mechanism. The residue at position 384 (cysteine 384) is a Phosphocysteine; by EIIA. The PTS EIIA type-2 domain occupies 494–635 (FQLGADNIFL…VDEVLALLNK (142 aa)). Catalysis depends on histidine 554, which acts as the Tele-phosphohistidine intermediate; for EIIA activity. Residue histidine 554 is modified to Phosphohistidine; by HPr.

Homodimer. An intramolecular phosphotransfer takes places between His-554 and Cys-384.

It localises to the cell inner membrane. It carries out the reaction D-mannitol(out) + N(pros)-phospho-L-histidyl-[protein] = D-mannitol 1-phosphate(in) + L-histidyl-[protein]. Its function is as follows. The phosphoenolpyruvate-dependent sugar phosphotransferase system (sugar PTS), a major carbohydrate active transport system, catalyzes the phosphorylation of incoming sugar substrates concomitantly with their translocation across the cell membrane. This system is involved in D-mannitol transport. The chain is PTS system mannitol-specific EIICBA component from Klebsiella pneumoniae.